A 121-amino-acid chain; its full sequence is Large ribosomal subunit protein eL18 (121 aa).

The protein belongs to the eukaryotic ribosomal protein eL18 family.

The protein is Large ribosomal subunit protein eL18 of Methanospirillum hungatei JF-1 (strain ATCC 27890 / DSM 864 / NBRC 100397 / JF-1).